The chain runs to 234 residues: Large ribosomal subunit protein uL1 (234 aa).

Belongs to the universal ribosomal protein uL1 family. As to quaternary structure, part of the 50S ribosomal subunit.

Binds directly to 23S rRNA. The L1 stalk is quite mobile in the ribosome, and is involved in E site tRNA release. Functionally, protein L1 is also a translational repressor protein, it controls the translation of the L11 operon by binding to its mRNA. This is Large ribosomal subunit protein uL1 from Helicobacter pylori (strain Shi470).